The primary structure comprises 103 residues: Large ribosomal subunit protein bL21 (103 aa).

This sequence belongs to the bacterial ribosomal protein bL21 family. As to quaternary structure, part of the 50S ribosomal subunit. Contacts protein L20.

In terms of biological role, this protein binds to 23S rRNA in the presence of protein L20. The chain is Large ribosomal subunit protein bL21 from Haemophilus ducreyi (strain 35000HP / ATCC 700724).